The primary structure comprises 233 residues: Large ribosomal subunit protein uL1 (233 aa).

It belongs to the universal ribosomal protein uL1 family. In terms of assembly, part of the 50S ribosomal subunit.

Functionally, binds directly to 23S rRNA. The L1 stalk is quite mobile in the ribosome, and is involved in E site tRNA release. In terms of biological role, protein L1 is also a translational repressor protein, it controls the translation of the L11 operon by binding to its mRNA. This Geobacillus thermodenitrificans (strain NG80-2) protein is Large ribosomal subunit protein uL1.